The primary structure comprises 1537 residues: Histone-lysine N-methyltransferase, H3 lysine-79 specific (1537 aa).

The DOT1 domain maps to 16–330 (EPAVYPWPLP…ILENYFSSLK (315 aa)). Residues 136-139 (YGET), 159-168 (FVDLGSGVGQ), E186, and 222-223 (DF) contribute to the S-adenosyl-L-methionine site. A Phosphoserine modification is found at S297. Residues 334-350 (LREEQEAARRRQQRESK) are compositionally biased toward basic and acidic residues. Residues 334 to 467 (LREEQEAARR…SPFYQLPPSV (134 aa)) are disordered. S374 bears the Phosphoserine mark. Positions 391 to 416 (PSKARKKKLNKKGRKMAGRKRGRPKK) are required for interaction with nucleosomes and DNA. The span at 393-416 (KARKKKLNKKGRKMAGRKRGRPKK) shows a compositional bias: basic residues. The segment covering 439 to 450 (QTVSQTAASSPQ) has biased composition (polar residues). 2 positions are modified to phosphoserine: S448 and S471. Phosphothreonine is present on T480. 2 positions are modified to phosphoserine: S775 and S786. Disordered regions lie at residues 785–853 (LSQD…LRER), 893–912 (RAER…DPSS), 957–1128 (TPGA…LNLN), and 1145–1243 (SPET…KWKS). The segment covering 800–809 (LHSRAEHTKE) has biased composition (basic and acidic residues). At S826 the chain carries Phosphoserine. S834 is subject to Phosphoserine; by MAPK11. Residues 844 to 853 (KSSEKGLRER) show a composition bias toward basic and acidic residues. Polar residues-rich tracts occupy residues 899–912 (STPS…DPSS), 966–986 (DESS…STPQ), and 994–1010 (PRNS…SSSP). T900 is modified (phosphothreonine; by MAPK11). S902 carries the phosphoserine; by MAPK11 modification. The residue at position 984 (T984) is a Phosphothreonine; by MAPK11. S997 is modified (phosphoserine). S1001 and S1009 each carry phosphoserine; by MAPK11. Phosphoserine is present on S1035. Residues 1048-1068 (TITTGAGSAKQSPSSKHSPLT) are compositionally biased toward polar residues. S1093 carries the phosphoserine modification. S1104 carries the phosphoserine; by MAPK11 modification. Polar residues predominate over residues 1118–1128 (TQPSGSPLNLN). Basic and acidic residues predominate over residues 1158–1171 (QDHDQPPVLKKERP). The segment covering 1172–1184 (LSQTNGAHYSPLT) has biased composition (polar residues). Acidic residues predominate over residues 1185–1195 (SDEEPGSEDEP). Residues S1213 and S1246 each carry the phosphoserine modification. The disordered stretch occupies residues 1334 to 1410 (GASLPHKGPE…DKTPLLSGKA (77 aa)).

This sequence belongs to the class I-like SAM-binding methyltransferase superfamily. DOT1 family. In terms of assembly, interacts with MLLT10.

It localises to the nucleus. The catalysed reaction is L-lysyl(79)-[histone H3] + 3 S-adenosyl-L-methionine = N(6),N(6),N(6)-trimethyl-L-lysyl(79)-[histone H3] + 3 S-adenosyl-L-homocysteine + 3 H(+). Functionally, histone methyltransferase. Methylates 'Lys-79' of histone H3. Nucleosomes are preferred as substrate compared to free histones. Binds to DNA. The chain is Histone-lysine N-methyltransferase, H3 lysine-79 specific from Homo sapiens (Human).